A 1700-amino-acid chain; its full sequence is A-kinase anchor protein SPHKAP (1700 aa).

3 disordered regions span residues 364-385 (SNLN…QDGE), 742-778 (IRRR…SNSH), and 793-885 (SKQD…NTQE). The segment covering 768–778 (SSSSSPLSNSH) has biased composition (low complexity). Polar residues predominate over residues 822-831 (DSSTATTSSK). Residues 839–855 (AGEDTKSPHHSENECRA) show a composition bias toward basic and acidic residues. A compositionally biased stretch (polar residues) spans 857 to 873 (SEGQRSPTVSQSRSGSQ). The interval 929-946 (FAEELADTVVSMATEIAA) is PKA-RII subunit binding domain. A disordered region spans residues 980 to 1006 (KRKKESQGSGTAVRKHKPPRLSEIKRK). 8 positions are modified to phosphoserine: Ser-1025, Ser-1085, Ser-1107, Ser-1120, Ser-1121, Ser-1124, Ser-1259, and Ser-1288. Disordered regions lie at residues 1374–1414 (DSVT…PVPI), 1481–1535 (IHSD…DTSS), and 1585–1604 (GQSE…TASP). Positions 1383 to 1398 (PVSSLSKTASLTNHSP) are enriched in polar residues. The segment covering 1586–1604 (QSESTEAPASGPPTGTASP) has biased composition (polar residues).

Belongs to the AKAP110 family. As to quaternary structure, interacts (via the PKA-RII subunit binding domain) with the RI subunit of PKA. Interacts with SPHK1; the interaction greatly reduces SPHK1 activity. As to expression, highly expressed in heart. Both isoforms abundantly expressed in ventricle. Also expressed in spleen, ovary and brain.

The protein localises to the cytoplasm. Anchoring protein that binds preferentially to the type I regulatory subunit of c-AMP-dependent protein kinase (PKA type I) and targets it to distinct subcellular compartments. May act as a converging factor linking cAMP and sphingosine signaling pathways. Plays a regulatory role in the modulation of SPHK1. This chain is A-kinase anchor protein SPHKAP (SPHKAP), found in Homo sapiens (Human).